Here is a 137-residue protein sequence, read N- to C-terminus: Large ribosomal subunit protein uL16 (137 aa).

Belongs to the universal ribosomal protein uL16 family. As to quaternary structure, part of the 50S ribosomal subunit.

Functionally, binds 23S rRNA and is also seen to make contacts with the A and possibly P site tRNAs. The chain is Large ribosomal subunit protein uL16 from Rhodopseudomonas palustris (strain ATCC BAA-98 / CGA009).